The chain runs to 296 residues: Chondrolectin (296 aa).

The signal sequence occupies residues 1-20; that stretch reads MRATLRILCALTFLVSCSRG. Residues 21–238 are Extracellular-facing; it reads ARVVSGQTVC…RLIIAGPSSM (218 aa). The C-type lectin domain occupies 38–187; the sequence is CYKIAYFKDV…CNMKHNFICK (150 aa). Residues 197–221 are compositionally biased toward basic and acidic residues; it reads VQSDRPGGHDVDLSTEDKEDRRTPP. The disordered stretch occupies residues 197 to 229; the sequence is VQSDRPGGHDVDLSTEDKEDRRTPPTDEDESPR. The chain crosses the membrane as a helical span at residues 239–266; it reads LLIYVIIPTIPLLLLILVASGTCCFQML. Topologically, residues 267–296 are cytoplasmic; that stretch reads SKSKPRTKTSVNQSTLWISKTPKIDSGMEV.

Expressed in developing motor neurons.

It localises to the membrane. Its function is as follows. Plays a role in the development of the nervous system such as in neurite outgrowth and elongation. Involved in motor axon growth and guidance. Required for correct interactions of motor axons with the horizontal myoseptum. The sequence is that of Chondrolectin (chodl) from Danio rerio (Zebrafish).